Here is a 298-residue protein sequence, read N- to C-terminus: 2-dehydro-3-deoxy-D-arabinonate dehydratase (298 aa).

Ile86 lines the substrate pocket. Residues Glu148, Glu150, and Asp169 each contribute to the Mg(2+) site. Substrate-binding residues include Lys187 and Thr261.

It belongs to the FAH family. In terms of assembly, homotetramer. The cofactor is Mg(2+). Requires Ca(2+) as cofactor.

It catalyses the reaction 2-dehydro-3-deoxy-D-arabinonate = 2,5-dioxopentanoate + H2O. Functionally, participates in a pentose oxidation pathway that converts D-arabinonate to 2-oxoglutarate. The chain is 2-dehydro-3-deoxy-D-arabinonate dehydratase from Saccharolobus solfataricus (strain ATCC 35092 / DSM 1617 / JCM 11322 / P2) (Sulfolobus solfataricus).